Consider the following 71-residue polypeptide: MKSVIFALFLVYLLIVRAAEANENIGLGLDRGSSGTIAAKQQMGIELANDPNGPGRRRRAPAENEDFLKHS.

The N-terminal stretch at 1-21 (MKSVIFALFLVYLLIVRAAEA) is a signal peptide. The segment at 45–71 (IELANDPNGPGRRRRAPAENEDFLKHS) is disordered. Residues 60–71 (APAENEDFLKHS) show a composition bias toward basic and acidic residues.

The protein belongs to the scoloptoxin-21 family. As to expression, expressed by the venom gland.

The protein localises to the secreted. This chain is U-scoloptoxin(21)-Sm1a, found in Scolopendra morsitans (Tanzanian blue ringleg centipede).